A 242-amino-acid polypeptide reads, in one-letter code: Carboxy-S-adenosyl-L-methionine synthase (242 aa).

S-adenosyl-L-methionine is bound by residues Tyr39, 64 to 66 (GCS), 89 to 90 (DN), 117 to 118 (DI), Asn132, and Arg199.

The protein belongs to the class I-like SAM-binding methyltransferase superfamily. Cx-SAM synthase family. As to quaternary structure, homodimer.

It carries out the reaction prephenate + S-adenosyl-L-methionine = carboxy-S-adenosyl-L-methionine + 3-phenylpyruvate + H2O. Its function is as follows. Catalyzes the conversion of S-adenosyl-L-methionine (SAM) to carboxy-S-adenosyl-L-methionine (Cx-SAM). The polypeptide is Carboxy-S-adenosyl-L-methionine synthase (Aliivibrio fischeri (strain ATCC 700601 / ES114) (Vibrio fischeri)).